The following is a 746-amino-acid chain: Exostosin-1 (746 aa).

Topologically, residues 1–7 (MQAKKRY) are cytoplasmic. The helical; Signal-anchor for type II membrane protein transmembrane segment at 8–28 (FILLSAGSCLALLFYFGGVQF) threads the bilayer. The Lumenal segment spans residues 29-746 (RASRSHSRRE…RKKYRDIERL (718 aa)). N89 is a glycosylation site (N-linked (GlcNAc...) asparagine). Disulfide bonds link C98–C103 and C109–C152. Residues L166 and Y203 each coordinate a protein. 4 residues coordinate UDP: K267, K269, Y271, and R280. An intrachain disulfide couples C298 to C312. H300 is an a protein binding site. UDP contacts are provided by Y319 and Y324. N330 carries an N-linked (GlcNAc...) asparagine glycan. 2 disulfide bridges follow: C334-C355 and C652-C704. Residues R346 and E349 each contribute to the UDP site.

This sequence belongs to the glycosyltransferase 47 family. Part of the heparan sulfate polymerase, a dimeric complex composed of EXT1 and EXT2. Could also form homooligomeric complexes. Interacts with NDST1. In terms of processing, N-glycosylated.

The protein localises to the golgi apparatus membrane. Its subcellular location is the golgi apparatus. The protein resides in the cis-Golgi network membrane. It is found in the endoplasmic reticulum membrane. It catalyses the reaction 3-O-{alpha-D-GlcNAc-[(1-&gt;4)-beta-D-GlcA-(1-&gt;4)-alpha-D-GlcNAc](n)-(1-&gt;4)-beta-D-GlcA-(1-&gt;3)-beta-D-Gal-(1-&gt;3)-beta-D-Gal-(1-&gt;4)-beta-D-Xyl}-L-seryl-[protein] + UDP-alpha-D-glucuronate = 3-O-{[(1-&gt;4)-beta-D-GlcA-(1-&gt;4)-alpha-D-GlcNAc](n+1)-(1-&gt;4)-beta-D-GlcA-(1-&gt;3)-beta-D-Gal-(1-&gt;3)-beta-D-Gal-(1-&gt;4)-beta-D-Xyl}-L-seryl-[protein] + UDP + H(+). The protein operates within protein modification; protein glycosylation. Its function is as follows. Glycosyltransferase forming with EXT2 the heterodimeric heparan sulfate polymerase which catalyzes the elongation of the heparan sulfate glycan backbone. Glycan backbone extension consists in the alternating transfer of (1-&gt;4)-beta-D-GlcA and (1-&gt;4)-alpha-D-GlcNAc residues from their respective UDP-sugar donors. Both EXT1 and EXT2 are required for the full activity of the polymerase since EXT1 bears the N-acetylglucosaminyl-proteoglycan 4-beta-glucuronosyltransferase activity within the complex while EXT2 carries the glucuronosyl-N-acetylglucosaminyl-proteoglycan 4-alpha-N-acetylglucosaminyltransferase activity. Heparan sulfate proteoglycans are ubiquitous components of the extracellular matrix and play an important role in tissue homeostasis and signaling. The sequence is that of Exostosin-1 from Mus musculus (Mouse).